Consider the following 702-residue polypeptide: Choline transporter-like protein 5-A (702 aa).

Residues 21–41 (VLCCVLFVIVILGYIALGTVA) traverse the membrane as a helical segment. Topologically, residues 42-225 (WIHGDPRKVI…KIVEDYASCW (184 aa)) are extracellular. N-linked (GlcNAc...) asparagine glycans are attached at residues Asn120, Asn173, and Asn180. Residues 226-246 (YWIVIGLFIALVISLIFILLL) form a helical membrane-spanning segment. Residues 247 to 249 (RFT) lie on the Cytoplasmic side of the membrane. The helical transmembrane segment at 250-270 (AGFLLWFIIFAVILLVAYGIW) threads the bilayer. Residues 271–308 (HCYWEFAVLRETPGADVTISDIGFQTDLHVYLQLSQTW) lie on the Extracellular side of the membrane. A helical membrane pass occupies residues 309–329 (LVFMVTLGLTEASIVLMLIFL). Over 330–334 (RKRVR) the chain is Cytoplasmic. Residues 335–355 (IAIALLREGSRAISYIMSALF) traverse the membrane as a helical segment. Over 356 to 357 (YP) the chain is Extracellular. A helical transmembrane segment spans residues 358-378 (IITFVLLAICISYWAMTALFL). The Cytoplasmic portion of the chain corresponds to 379 to 443 (ASSGDAVYKV…RYIFILQLCN (65 aa)). Residues 444-464 (LLVFLWLVNFTIALGQCTVAG) form a helical membrane-spanning segment. At 465 to 498 (AFASYYWARRKPADIPPCPVFSSFSRALRYHTGS) the chain is on the extracellular side. A helical membrane pass occupies residues 499–519 (LAFGSLILAVVQLIRVILEYL). Residues 520–593 (DHKLKGAHNA…RVAVLDKVTD (74 aa)) are Cytoplasmic-facing. A helical transmembrane segment spans residues 594–614 (FLLFLGKLLIAGSVGVIAFFL). Over 615-632 (FTRKIPIIQEEVPVLNYY) the chain is Extracellular. A helical membrane pass occupies residues 633 to 653 (CVPLLTVILGSYLIAHSFFSV). At 654-699 (YAMCVDTLFLCFCEDLERNDGTTAKPFFMSPGLKRILGKAEQSPKK) the chain is on the cytoplasmic side.

Belongs to the CTL (choline transporter-like) family.

It localises to the cell membrane. It catalyses the reaction choline(out) + n H(+)(in) = choline(in) + n H(+)(out). Its function is as follows. Choline/H+ antiporter. This is Choline transporter-like protein 5-A (slc44a5a) from Danio rerio (Zebrafish).